A 567-amino-acid polypeptide reads, in one-letter code: Urease subunit alpha (567 aa).

One can recognise a Urease domain in the interval Gly-128–Phe-567. 3 residues coordinate Ni(2+): His-133, His-135, and Lys-216. N6-carboxylysine is present on Lys-216. His-218 serves as a coordination point for substrate. Ni(2+) contacts are provided by His-245 and His-271. His-319 acts as the Proton donor in catalysis. Residue Asp-359 coordinates Ni(2+).

The protein belongs to the metallo-dependent hydrolases superfamily. Urease alpha subunit family. Heterotrimer of UreA (gamma), UreB (beta) and UreC (alpha) subunits. Three heterotrimers associate to form the active enzyme. Ni cation is required as a cofactor. Carboxylation allows a single lysine to coordinate two nickel ions.

The protein resides in the cytoplasm. It catalyses the reaction urea + 2 H2O + H(+) = hydrogencarbonate + 2 NH4(+). It functions in the pathway nitrogen metabolism; urea degradation; CO(2) and NH(3) from urea (urease route): step 1/1. This is Urease subunit alpha from Blochmanniella pennsylvanica (strain BPEN).